A 61-amino-acid chain; its full sequence is Odorranain-A6 (61 aa).

An N-terminal signal peptide occupies residues 1–22 (MFSMKKSLLLLFFLGTISLSLC). Positions 23-45 (EQERDAEEEEGSENGAEDIKINR) are excised as a propeptide.

It belongs to the frog skin active peptide (FSAP) family. Brevinin subfamily. As to expression, expressed by the skin glands.

Its subcellular location is the secreted. The polypeptide is Odorranain-A6 (Odorrana hainanensis (Odor frog)).